The chain runs to 147 residues: Hemoglobin subunit beta-1 (147 aa).

Residues 3 to 147 (EWTATERTHI…VVSALGRQYH (145 aa)) form the Globin domain. His64 and His93 together coordinate heme b.

It belongs to the globin family. As to quaternary structure, hb 1 is a heterotetramer of two alpha-1 and two beta-1 chains. Hb 2 is a heterotetramer of two alpha-2 and two beta-1 chains. As to expression, red blood cells.

Functionally, involved in oxygen transport from gills to the various peripheral tissues. The protein is Hemoglobin subunit beta-1 (hbb1) of Boreogadus saida (Polar cod).